Consider the following 224-residue polypeptide: Heme response regulator HssR (224 aa).

Residues 3-116 (QCLVVDDDPR…ELIFRIRAVL (114 aa)) enclose the Response regulatory domain. Residue Asp52 is modified to 4-aspartylphosphate. The ompR/PhoB-type DNA-binding region spans 124-222 (NSEMTIGNLT…VRGQGYKVEN (99 aa)).

In terms of processing, phosphorylated by HssS.

The protein localises to the cytoplasm. Member of the two-component regulatory system HssS/HssR involved in intracellular heme homeostasis and tempering of staphylococcal virulence. Phosphorylated HssR binds to a direct repeat sequence within hrtAB promoter and activates the expression of hrtAB, an efflux pump, in response to extracellular heme, hemin, hemoglobin or blood. This chain is Heme response regulator HssR (hssR), found in Staphylococcus aureus (strain COL).